A 113-amino-acid polypeptide reads, in one-letter code: Large ribosomal subunit protein bL17 (113 aa).

The protein belongs to the bacterial ribosomal protein bL17 family. In terms of assembly, part of the 50S ribosomal subunit. Contacts protein L32.

This chain is Large ribosomal subunit protein bL17, found in Caldicellulosiruptor saccharolyticus (strain ATCC 43494 / DSM 8903 / Tp8T 6331).